The primary structure comprises 1241 residues: ATP-dependent helicase/nuclease subunit A (1241 aa).

The UvrD-like helicase ATP-binding domain occupies 12–485 (SQWTDDQWKA…IDLAKNFRSR (474 aa)). ATP is bound at residue 33-40 (AAAGSGKT). One can recognise a UvrD-like helicase C-terminal domain in the interval 505-805 (GEIDYDADAE…RIMTIHKSKG (301 aa)).

The protein belongs to the helicase family. AddA subfamily. Heterodimer of AddA and AddB/RexB. It depends on Mg(2+) as a cofactor.

It carries out the reaction Couples ATP hydrolysis with the unwinding of duplex DNA by translocating in the 3'-5' direction.. The catalysed reaction is ATP + H2O = ADP + phosphate + H(+). In terms of biological role, the heterodimer acts as both an ATP-dependent DNA helicase and an ATP-dependent, dual-direction single-stranded exonuclease. Recognizes the chi site generating a DNA molecule suitable for the initiation of homologous recombination. The AddA nuclease domain is required for chi fragment generation; this subunit has the helicase and 3' -&gt; 5' nuclease activities. The polypeptide is ATP-dependent helicase/nuclease subunit A (Bacillus cereus (strain AH187)).